A 59-amino-acid chain; its full sequence is Large ribosomal subunit protein uL30 (59 aa).

This sequence belongs to the universal ribosomal protein uL30 family. As to quaternary structure, part of the 50S ribosomal subunit.

The polypeptide is Large ribosomal subunit protein uL30 (Brachyspira hyodysenteriae (strain ATCC 49526 / WA1)).